Consider the following 674-residue polypeptide: Endopolyphosphatase (674 aa).

Residues 1–21 (MVVVGKSEVRNVSMSRPKKKS) are Cytoplasmic-facing. 2 propeptides (removed in mature form) span residues 1–83 (MVVV…VIIK) and 385–674 (EQST…YKDD). Residue Lys6 forms a Glycyl lysine isopeptide (Lys-Gly) (interchain with G-Cter in ubiquitin) linkage. The chain crosses the membrane as a helical; Signal-anchor for type II membrane protein span at residues 22 to 42 (LIAILSTCVLFFLVFIIGAKF). Over 43–674 (QYVSVFSKFL…SFASSGYKDD (632 aa)) the chain is Vacuolar. N-linked (GlcNAc...) asparagine glycosylation is present at Asn58. The interval 384–403 (MEQSTRVQQGEDSNEEDEET) is disordered. Residues Asn505 and Asn511 are each glycosylated (N-linked (GlcNAc...) asparagine).

It belongs to the endopolyphosphatase PPN1 family. As to quaternary structure, homotetramer. Interacts with PPN2. Mn(2+) serves as cofactor. Mg(2+) is required as a cofactor. Requires Co(2+) as cofactor. The cofactor is Zn(2+). In terms of processing, processing by proteases in the vacuole is required for activation. Ubiquitinated. Ubiquitination mediates sorting into internal vesicles in late endosomes. TUL1 and RSP5 are required for ubiquitination. Other cytoplasmic Lys residues than Lys-6 may also be ubiquitinated. Post-translationally, N-glycosylated. N-glycosylation is essential for the protease-mediated maturation.

It localises to the vacuole membrane. The protein resides in the cytoplasm. It carries out the reaction [phosphate](n+1) + n H2O = (n+1) phosphate + n H(+). The catalysed reaction is [phosphate](n) + H2O = [phosphate](n-1) + phosphate + H(+). The enzyme catalyses dATP + H2O = dADP + phosphate + H(+). With respect to regulation, inhibited by heparin and EDTA. Catalyzes the hydrolysis of inorganic polyphosphate (polyP) chains of many hundreds of phosphate residues into shorter lengths. Has both exopolyphosphatase and endopolyphosphatase activities at different ratios depending on divalent cations by cleaving phosphate from the chain end and by fragmenting long-chain polymers into shorter ones, respectively. The limited digestion products are 1 and 3 P(i) residues. Also releases phosphate from dATP. dATP phosphohydrolase activity is about 7-fold lower than the exopolyphosphatase activity. This chain is Endopolyphosphatase, found in Saccharomyces cerevisiae (strain ATCC 204508 / S288c) (Baker's yeast).